The primary structure comprises 182 residues: MALSREEIASRYSKALFAYAQDAKKLDEVHEDMNVLLQVAKENPDMLRLLSDPIIRKNQKEEFLSSFSGEFSSETKNFLEFLLEYGRFNALTEIIKAFDALYDEDKNIASGTAVSAINLDEDELNRISQAYAKKYGFKKLILTNEVDSSILGGIILKVGDRIIDGSIRTRLQQIREQLIENR.

The protein belongs to the ATPase delta chain family. F-type ATPases have 2 components, F(1) - the catalytic core - and F(0) - the membrane proton channel. F(1) has five subunits: alpha(3), beta(3), gamma(1), delta(1), epsilon(1). F(0) has three main subunits: a(1), b(2) and c(10-14). The alpha and beta chains form an alternating ring which encloses part of the gamma chain. F(1) is attached to F(0) by a central stalk formed by the gamma and epsilon chains, while a peripheral stalk is formed by the delta and b chains.

The protein localises to the cell membrane. Its function is as follows. F(1)F(0) ATP synthase produces ATP from ADP in the presence of a proton or sodium gradient. F-type ATPases consist of two structural domains, F(1) containing the extramembraneous catalytic core and F(0) containing the membrane proton channel, linked together by a central stalk and a peripheral stalk. During catalysis, ATP synthesis in the catalytic domain of F(1) is coupled via a rotary mechanism of the central stalk subunits to proton translocation. In terms of biological role, this protein is part of the stalk that links CF(0) to CF(1). It either transmits conformational changes from CF(0) to CF(1) or is implicated in proton conduction. In Lactobacillus gasseri (strain ATCC 33323 / DSM 20243 / BCRC 14619 / CIP 102991 / JCM 1131 / KCTC 3163 / NCIMB 11718 / NCTC 13722 / AM63), this protein is ATP synthase subunit delta.